A 472-amino-acid polypeptide reads, in one-letter code: Serralysin A (472 aa).

Residues 1-17 (MEKNLSSRDDDALHSLS) constitute a propeptide that is removed on maturation. Residue His186 participates in Zn(2+) binding. Glu187 is a catalytic residue. Zn(2+) contacts are provided by His190 and Tyr221. Residues Arg258, Gly260, Thr262, Asp290, Gly292, Gly293, Thr332, Glu334, Gly339, Gly341, Asp343, Asn348, Ala350, Asn352, Gly356, Gly357, Ala358, Gly359, Asp361, Gly365, Gly366, Gly367, Gly368, Asp370, Gly374, Gly375, Gly377, Asp379, Asp388, Asp395, and Asp405 each contribute to the Ca(2+) site. 2 Hemolysin-type calcium-binding repeats span residues 337–354 (IGGS…DNIL) and 355–372 (RGGA…ADRL).

The protein belongs to the peptidase M10B family. Ca(2+) serves as cofactor. The cofactor is Zn(2+).

It is found in the secreted. The enzyme catalyses Preferential cleavage of bonds with hydrophobic residues in P1'.. The protein is Serralysin A (prtA) of Dickeya chrysanthemi (Pectobacterium chrysanthemi).